The following is a 525-amino-acid chain: Zinc finger protein 678 (525 aa).

C2H2-type zinc fingers lie at residues 97-119, 125-147, 153-175, 181-203, 209-231, 237-259, 265-287, 293-315, 321-343, 349-371, 377-399, 405-427, 433-455, and 461-483; these read FQCI…KRIH, YKCE…KRIH, YKCD…KKIH, YPCE…KRIH, YKCK…KRIH, YKCE…RRIH, YQCE…KRIH, and YKCK…RRIH. A C2H2-type 15; degenerate zinc finger spans residues 489–511; that stretch reads YKCKECGKGFYQSSIHSKYKRIY.

It belongs to the krueppel C2H2-type zinc-finger protein family.

It localises to the nucleus. Its function is as follows. May be involved in transcriptional regulation. The chain is Zinc finger protein 678 (ZNF678) from Homo sapiens (Human).